Reading from the N-terminus, the 435-residue chain is Solute carrier family 38 member 8 (435 aa).

Transmembrane regions (helical) follow at residues 29 to 49, 55 to 75, 100 to 120, 151 to 171, 178 to 198, 218 to 240, 250 to 270, 295 to 315, 348 to 368, 374 to 394, and 410 to 430; these read AVFI…PWAF, VVPA…GLVI, IGKL…VAFL, FTLP…REIA, ILGT…YYLW, VFSV…SIYC, WALV…LTGV, IIVA…IVLF, MPLT…MPDL, IIGG…LICA, and VWGV…TAAA.

The protein belongs to the amino acid/polyamine transporter 2 family. In terms of tissue distribution, expressed in fetal and adult brain, and spinal cord. In the brain, it is localized in the cell body and axon of the majority of neuronal cells and in a subset of glial cells. Found throughout the neuronal retina, with higher expression levels in the inner and outer plexiform layers and the photoreceptor layer. Very weak expression is also present in the kidneys, thymus, and testes.

The protein localises to the membrane. It is found in the cytoplasm. The protein resides in the cell cortex. It localises to the cell projection. Its subcellular location is the axon. It carries out the reaction L-glutamine(out) = L-glutamine(in). The enzyme catalyses L-alanine(in) = L-alanine(out). It catalyses the reaction L-histidine(out) = L-histidine(in). The catalysed reaction is L-aspartate(out) = L-aspartate(in). It carries out the reaction L-arginine(in) = L-arginine(out). The enzyme catalyses L-leucine(in) = L-leucine(out). Electrogenic sodium-dependent amino acid transporter with a preference for L-glutamine, L-alanine, L-histidine, L-aspartate and L-arginine. May facilitate glutamine uptake in both excitatory and inhibitory neurons. The transport mechanism and stoichiometry remain to be elucidated. The sequence is that of Solute carrier family 38 member 8 from Homo sapiens (Human).